Reading from the N-terminus, the 764-residue chain is 5-methyltetrahydropteroyltriglutamate--homocysteine methyltransferase (764 aa).

5-methyltetrahydropteroyltri-L-glutamate is bound by residues 16-19 (RELK) and lysine 117. Residues 442–444 (IGS) and glutamate 495 contribute to the L-homocysteine site. L-methionine contacts are provided by residues 442-444 (IGS) and glutamate 495. 5-methyltetrahydropteroyltri-L-glutamate contacts are provided by residues 526–527 (RC) and tryptophan 572. Aspartate 610 contributes to the L-homocysteine binding site. Residue aspartate 610 coordinates L-methionine. Residue glutamate 616 participates in 5-methyltetrahydropteroyltri-L-glutamate binding. 3 residues coordinate Zn(2+): histidine 652, cysteine 654, and glutamate 676. Residue histidine 705 is the Proton donor of the active site. Cysteine 737 contacts Zn(2+).

The protein belongs to the vitamin-B12 independent methionine synthase family. It depends on Zn(2+) as a cofactor.

The enzyme catalyses 5-methyltetrahydropteroyltri-L-glutamate + L-homocysteine = tetrahydropteroyltri-L-glutamate + L-methionine. It functions in the pathway amino-acid biosynthesis; L-methionine biosynthesis via de novo pathway; L-methionine from L-homocysteine (MetE route): step 1/1. Functionally, catalyzes the transfer of a methyl group from 5-methyltetrahydrofolate to homocysteine resulting in methionine formation. This is 5-methyltetrahydropteroyltriglutamate--homocysteine methyltransferase from Bordetella pertussis (strain Tohama I / ATCC BAA-589 / NCTC 13251).